Reading from the N-terminus, the 413-residue chain is MQSWPDPEVPKLSGDSPALRLYDTADRAVRPVAPGPTATLYVCGITPYDATHLGHAATYVTFDQVNRVLRDQGHDVHYVQNITDVDDPLFERAERDGVDWRELGSEQIQLFRDDMTALRVLPPRDYIGAMESVDEVIEAVEKLLASGAAYVVDDPEYPDVYFRTDATEQFGYESGYDRATMARFFAERGGDPDRAGKRDPLDAVLWRAARDGEPSWEAPFGPGRPGWHIECSAIALNRLGIEFDIQGGGNDLIFPHHEFSAAHGEALTDSRRFARHYVHTGMVGLDGEKMSKSRGNLVFVSVLRRDGVDPAAIRLALLADHYRSDRMWTDDVLATAVDRLQRWRTAAAAPAGPDAAPTVARLRQHLADDLDTPKALDAVDAWCADVRTGIGSDPAAPAQIARAVDALLGVVIA.

Residue Cys-43 coordinates Zn(2+). L-cysteinyl-5'-AMP contacts are provided by residues 43-46, Thr-58, and 81-83; these read CGIT and NIT. A 'HIGH' region motif is present at residues 45–55; the sequence is ITPYDATHLGH. The 'ERGGDP' region signature appears at 187 to 192; sequence ERGGDP. Trp-227 is a binding site for L-cysteinyl-5'-AMP. Residue Cys-231 participates in Zn(2+) binding. 249 to 251 is a binding site for L-cysteinyl-5'-AMP; that stretch reads GND. Residue His-256 coordinates Zn(2+). Val-283 is a binding site for L-cysteinyl-5'-AMP. A 'KMSKS' region motif is present at residues 289 to 293; the sequence is KMSKS.

This sequence belongs to the class-I aminoacyl-tRNA synthetase family. MshC subfamily. Monomer. Requires Zn(2+) as cofactor.

It catalyses the reaction 1D-myo-inositol 2-amino-2-deoxy-alpha-D-glucopyranoside + L-cysteine + ATP = 1D-myo-inositol 2-(L-cysteinylamino)-2-deoxy-alpha-D-glucopyranoside + AMP + diphosphate + H(+). Its function is as follows. Catalyzes the ATP-dependent condensation of GlcN-Ins and L-cysteine to form L-Cys-GlcN-Ins. In Gordonia bronchialis (strain ATCC 25592 / DSM 43247 / BCRC 13721 / JCM 3198 / KCTC 3076 / NBRC 16047 / NCTC 10667) (Rhodococcus bronchialis), this protein is L-cysteine:1D-myo-inositol 2-amino-2-deoxy-alpha-D-glucopyranoside ligase.